The sequence spans 190 residues: MLDTLQKSLEISPVIKKNNYYYFINPITDGIPSVEPELLQEIANHIVENTKMNVDKIVSIEAMGIPIATSLSLKSGVPLSIIRKRKYGLNGEIAVSQSTGYSKGQLYINGIESGDRILIVDDVVSTGGTLQSVIKALIDAGSIIDEVVVIVERGEGVSKLKEMNIPVKSLIKINVDEKGVSIREVNGGKQ.

It belongs to the purine/pyrimidine phosphoribosyltransferase family. Archaeal HPRT subfamily. In terms of assembly, homodimer.

It is found in the cytoplasm. It catalyses the reaction IMP + diphosphate = hypoxanthine + 5-phospho-alpha-D-ribose 1-diphosphate. The enzyme catalyses GMP + diphosphate = guanine + 5-phospho-alpha-D-ribose 1-diphosphate. It functions in the pathway purine metabolism; IMP biosynthesis via salvage pathway; IMP from hypoxanthine: step 1/1. Functionally, catalyzes a salvage reaction resulting in the formation of IMP that is energically less costly than de novo synthesis. This is Hypoxanthine/guanine phosphoribosyltransferase from Methanohalobium evestigatum (strain ATCC BAA-1072 / DSM 3721 / NBRC 107634 / OCM 161 / Z-7303).